A 142-amino-acid chain; its full sequence is Hemoglobin subunit alpha-1/2 (142 aa).

Residues 2–142 (VLSADDKTNI…VSTVLTSKYR (141 aa)) enclose the Globin domain. Ser4 carries the post-translational modification Phosphoserine. At Lys8 the chain carries N6-succinyllysine. A Phosphothreonine modification is found at Thr9. Lys12 carries the N6-succinyllysine modification. An N6-acetyllysine; alternate modification is found at Lys17. Lys17 is modified (N6-succinyllysine; alternate). Tyr25 bears the Phosphotyrosine mark. An N6-succinyllysine modification is found at Lys41. Position 50 is a phosphoserine (Ser50). His59 lines the O2 pocket. His88 is a binding site for heme b. Ser103 bears the Phosphoserine mark. Thr109 bears the Phosphothreonine mark. Phosphoserine occurs at positions 125 and 132. Phosphothreonine occurs at positions 135 and 138. Ser139 is subject to Phosphoserine.

It belongs to the globin family. Heterotetramer of two alpha chains and two beta chains. As to expression, red blood cells.

In terms of biological role, involved in oxygen transport from the lung to the various peripheral tissues. Hemopressin acts as an antagonist peptide of the cannabinoid receptor CNR1. Hemopressin-binding efficiently blocks cannabinoid receptor CNR1 and subsequent signaling. The polypeptide is Hemoglobin subunit alpha-1/2 (Hba1) (Rattus norvegicus (Rat)).